The primary structure comprises 267 residues: Phosphate import ATP-binding protein PstB (267 aa).

The ABC transporter domain maps to 21–262 (VAARNLDFYY…PSKQQTEDYI (242 aa)). 53-60 (GPSGCGKS) contributes to the ATP binding site.

The protein belongs to the ABC transporter superfamily. Phosphate importer (TC 3.A.1.7) family. The complex is composed of two ATP-binding proteins (PstB), two transmembrane proteins (PstC and PstA) and a solute-binding protein (PstS).

The protein localises to the cell inner membrane. The enzyme catalyses phosphate(out) + ATP + H2O = ADP + 2 phosphate(in) + H(+). In terms of biological role, part of the ABC transporter complex PstSACB involved in phosphate import. Responsible for energy coupling to the transport system. The polypeptide is Phosphate import ATP-binding protein PstB (Xanthomonas axonopodis pv. citri (strain 306)).